We begin with the raw amino-acid sequence, 119 residues long: Holo-[acyl-carrier-protein] synthase (119 aa).

Residues D8 and E58 each contribute to the Mg(2+) site.

It belongs to the P-Pant transferase superfamily. AcpS family. Mg(2+) is required as a cofactor.

The protein localises to the cytoplasm. It catalyses the reaction apo-[ACP] + CoA = holo-[ACP] + adenosine 3',5'-bisphosphate + H(+). Functionally, transfers the 4'-phosphopantetheine moiety from coenzyme A to a Ser of acyl-carrier-protein. This Limosilactobacillus fermentum (strain NBRC 3956 / LMG 18251) (Lactobacillus fermentum) protein is Holo-[acyl-carrier-protein] synthase.